The chain runs to 219 residues: Octanoyltransferase (219 aa).

Positions 24 to 212 constitute a BPL/LPL catalytic domain; it reads KFRRECILFL…NLNSFLGPIS (189 aa). Substrate contacts are provided by residues 69–76, 140–142, and 153–155; these read RGGDFTAH, SIG, and GVA. Cys171 serves as the catalytic Acyl-thioester intermediate.

Belongs to the LipB family.

It localises to the cytoplasm. The catalysed reaction is octanoyl-[ACP] + L-lysyl-[protein] = N(6)-octanoyl-L-lysyl-[protein] + holo-[ACP] + H(+). It participates in protein modification; protein lipoylation via endogenous pathway; protein N(6)-(lipoyl)lysine from octanoyl-[acyl-carrier-protein]: step 1/2. Catalyzes the transfer of endogenously produced octanoic acid from octanoyl-acyl-carrier-protein onto the lipoyl domains of lipoate-dependent enzymes. Lipoyl-ACP can also act as a substrate although octanoyl-ACP is likely to be the physiological substrate. This Leptospira borgpetersenii serovar Hardjo-bovis (strain JB197) protein is Octanoyltransferase.